We begin with the raw amino-acid sequence, 439 residues long: MNVKVEDISSIKKKLSFEISVEAVDTEFSNEYKKLSKTAKIPGFRKGKVPRSVLERQYAGHVEGQVFERLVNETFFKALVDEKINAVSAPEVVDNGPLKPGQAFTYEAEVEVRPDVEAKDYIGLDLKKENFAVEDQDVEDRLQDMLKSRAKVEVSEREVAQAGDIAVIDFEGFVDGEAFAGGKAEGHELELGSNSFIPGFEDQVVGMECGQDKDIEVAFPEDYGNEELAGKPAVFKVRLNQIKERVLPALDEEFAKEAGLESVEDLKIKIRESIEGQERDRIEKDFRERMTDALIEANEFEVPEGMIDSQIDYMLKNLQNRMQAQGMRLEDMGINAESFRQIYREVAAKQVKASLILEAIALQENLKVEEDEIKDKLEEIVETSGAPKEAVMNYYSNDESRRGLVSQMAEEKVVAFLTGKAKIEMVDKEALENAKMTEE.

The PPIase FKBP-type domain occupies 163–248 (GDIAVIDFEG…LNQIKERVLP (86 aa)).

It belongs to the FKBP-type PPIase family. Tig subfamily.

It is found in the cytoplasm. It catalyses the reaction [protein]-peptidylproline (omega=180) = [protein]-peptidylproline (omega=0). Functionally, involved in protein export. Acts as a chaperone by maintaining the newly synthesized protein in an open conformation. Functions as a peptidyl-prolyl cis-trans isomerase. This chain is Trigger factor, found in Syntrophotalea carbinolica (strain DSM 2380 / NBRC 103641 / GraBd1) (Pelobacter carbinolicus).